Here is a 602-residue protein sequence, read N- to C-terminus: UvrABC system protein C (602 aa).

Residues 17-94 (KTSGCYKMYS…IKKYKPTYNI (78 aa)) enclose the GIY-YIG domain. One can recognise a UVR domain in the interval 199–234 (SKLLNDIEIKMKEVIMKENFEAAIKLKETKKSLIEI).

It belongs to the UvrC family. As to quaternary structure, interacts with UvrB in an incision complex.

The protein localises to the cytoplasm. In terms of biological role, the UvrABC repair system catalyzes the recognition and processing of DNA lesions. UvrC both incises the 5' and 3' sides of the lesion. The N-terminal half is responsible for the 3' incision and the C-terminal half is responsible for the 5' incision. In Borrelia recurrentis (strain A1), this protein is UvrABC system protein C.